A 159-amino-acid chain; its full sequence is Lipoprotein signal peptidase (159 aa).

Transmembrane regions (helical) follow at residues 64–84 and 89–109; these read SVQW…IWVV and PPFW…GNGI. Residues Asp-119 and Asp-135 contribute to the active site. Residues 130 to 150 traverse the membrane as a helical segment; sequence IFNPADIAINLAVLCFLVDLW.

Belongs to the peptidase A8 family.

Its subcellular location is the cell inner membrane. It catalyses the reaction Release of signal peptides from bacterial membrane prolipoproteins. Hydrolyzes -Xaa-Yaa-Zaa-|-(S,diacylglyceryl)Cys-, in which Xaa is hydrophobic (preferably Leu), and Yaa (Ala or Ser) and Zaa (Gly or Ala) have small, neutral side chains.. It participates in protein modification; lipoprotein biosynthesis (signal peptide cleavage). This protein specifically catalyzes the removal of signal peptides from prolipoproteins. The protein is Lipoprotein signal peptidase of Parasynechococcus marenigrum (strain WH8102).